Reading from the N-terminus, the 170-residue chain is IMPACT family member YDL177C (170 aa).

The interval 79 to 98 (KKKGNKANKSNNSHVNKSRN) is disordered.

Belongs to the IMPACT family.

The sequence is that of IMPACT family member YDL177C from Saccharomyces cerevisiae (strain ATCC 204508 / S288c) (Baker's yeast).